A 376-amino-acid polypeptide reads, in one-letter code: Putative cytosolic 5'-nucleotidase 3 (376 aa).

The active-site Nucleophile is Asp-119. Asp-119 and Asp-121 together coordinate Mg(2+). Residue Asp-121 is the Proton donor of the active site. Substrate contacts are provided by residues Glu-168, Ser-189, 236–237, and Lys-286; that span reads SA. Asp-312 contacts Mg(2+).

The protein belongs to the pyrimidine 5'-nucleotidase family.

Its subcellular location is the cytoplasm. It carries out the reaction a ribonucleoside 5'-phosphate + H2O = a ribonucleoside + phosphate. The protein is Putative cytosolic 5'-nucleotidase 3 of Caenorhabditis elegans.